The primary structure comprises 483 residues: tRNA sulfurtransferase (483 aa).

The THUMP domain occupies 61–165; sequence PLVADALTLI…NDRLLLITER (105 aa). ATP is bound by residues 183–184, Lys265, Gly287, and Gln296; that span reads LI. Cys344 and Cys457 are joined by a disulfide. The region spanning 405–483 is the Rhodanese domain; the sequence is LGSGDVVLDI…GFQNVKVYRP (79 aa). The active-site Cysteine persulfide intermediate is the Cys457.

The protein belongs to the ThiI family.

The protein localises to the cytoplasm. The enzyme catalyses [ThiI sulfur-carrier protein]-S-sulfanyl-L-cysteine + a uridine in tRNA + 2 reduced [2Fe-2S]-[ferredoxin] + ATP + H(+) = [ThiI sulfur-carrier protein]-L-cysteine + a 4-thiouridine in tRNA + 2 oxidized [2Fe-2S]-[ferredoxin] + AMP + diphosphate. It carries out the reaction [ThiS sulfur-carrier protein]-C-terminal Gly-Gly-AMP + S-sulfanyl-L-cysteinyl-[cysteine desulfurase] + AH2 = [ThiS sulfur-carrier protein]-C-terminal-Gly-aminoethanethioate + L-cysteinyl-[cysteine desulfurase] + A + AMP + 2 H(+). It participates in cofactor biosynthesis; thiamine diphosphate biosynthesis. Catalyzes the ATP-dependent transfer of a sulfur to tRNA to produce 4-thiouridine in position 8 of tRNAs, which functions as a near-UV photosensor. Also catalyzes the transfer of sulfur to the sulfur carrier protein ThiS, forming ThiS-thiocarboxylate. This is a step in the synthesis of thiazole, in the thiamine biosynthesis pathway. The sulfur is donated as persulfide by IscS. The polypeptide is tRNA sulfurtransferase (Sodalis glossinidius (strain morsitans)).